The chain runs to 337 residues: DNA-directed RNA polymerase subunit alpha (337 aa).

Residues 1-233 (MIQKNWQELI…DQLSIFVNFE (233 aa)) form an alpha N-terminal domain (alpha-NTD) region. The alpha C-terminal domain (alpha-CTD) stretch occupies residues 249-337 (FNPALLKKVD…DLAKRYEDQY (89 aa)).

The protein belongs to the RNA polymerase alpha chain family. Homodimer. The RNAP catalytic core consists of 2 alpha, 1 beta, 1 beta' and 1 omega subunit. When a sigma factor is associated with the core the holoenzyme is formed, which can initiate transcription.

It carries out the reaction RNA(n) + a ribonucleoside 5'-triphosphate = RNA(n+1) + diphosphate. Functionally, DNA-dependent RNA polymerase catalyzes the transcription of DNA into RNA using the four ribonucleoside triphosphates as substrates. In Brucella suis (strain ATCC 23445 / NCTC 10510), this protein is DNA-directed RNA polymerase subunit alpha.